Reading from the N-terminus, the 74-residue chain is Mu-conotoxin-like T3.1 (74 aa).

An N-terminal signal peptide occupies residues 1–19; sequence MSKLGVLLTICLLLFPLTA. Positions 20-74 are excised as a propeptide; sequence LPMDGDEPADRPAERMQDNISSEQHPLFEERHGCCKGPEGCSSRECRPQHCCGRR. Cystine bridges form between Cys53-Cys65, Cys54-Cys70, and Cys60-Cys71. Pro57 carries the 4-hydroxyproline modification. 4-carboxyglutamate occurs at positions 58 and 64. Pro67 is subject to 4-hydroxyproline. A Cysteine amide modification is found at Cys71.

This sequence belongs to the conotoxin M superfamily. Expressed by the venom duct.

Its subcellular location is the secreted. Mu-conotoxins block voltage-gated sodium channels (Nav). In vitro, this synthetic peptide displays a low blocking effect in mouse extensor digitorum longus muscles (IC(50)=616 nM). This is Mu-conotoxin-like T3.1 from Conus tulipa (Fish-hunting cone snail).